The sequence spans 452 residues: Coproporphyrinogen III oxidase, anaerobic 1 (452 aa).

The 234-residue stretch at 45 to 278 (LDPAVPISVY…ANLAARLFTE (234 aa)) folds into the Radical SAM core domain. An S-adenosyl-L-methionine-binding site is contributed by Tyr54. [4Fe-4S] cluster is bound by residues Cys60 and Cys64. Phe66 contributes to the S-adenosyl-L-methionine binding site. Cys67 serves as a coordination point for [4Fe-4S] cluster. S-adenosyl-L-methionine contacts are provided by residues Gly111, 112–113 (GT), Glu144, Gln171, Arg183, and Asp208.

This sequence belongs to the anaerobic coproporphyrinogen-III oxidase family. Monomer. It depends on [4Fe-4S] cluster as a cofactor.

The protein localises to the cytoplasm. The catalysed reaction is coproporphyrinogen III + 2 S-adenosyl-L-methionine = protoporphyrinogen IX + 2 5'-deoxyadenosine + 2 L-methionine + 2 CO2. Its pathway is porphyrin-containing compound metabolism; protoporphyrin-IX biosynthesis; protoporphyrinogen-IX from coproporphyrinogen-III (AdoMet route): step 1/1. Its function is as follows. Anaerobic transformation of coproporphyrinogen III into protoporphyrinogen IX. Dedicated to bacteriochlorophyll biosynthesis. The protein is Coproporphyrinogen III oxidase, anaerobic 1 (hemN) of Cereibacter sphaeroides (strain ATCC 17023 / DSM 158 / JCM 6121 / CCUG 31486 / LMG 2827 / NBRC 12203 / NCIMB 8253 / ATH 2.4.1.) (Rhodobacter sphaeroides).